A 511-amino-acid polypeptide reads, in one-letter code: Glucan endo-1,3-beta-glucosidase 1 (511 aa).

A signal peptide spans methionine 1–serine 28. An N-linked (GlcNAc...) asparagine glycan is attached at asparagine 109. Residue glutamate 137 is the Proton donor of the active site. 2 N-linked (GlcNAc...) asparagine glycosylation sites follow: asparagine 192 and asparagine 274. Residue glutamate 284 is the Nucleophile of the active site. Residues asparagine 374, asparagine 378, asparagine 407, asparagine 473, and asparagine 480 are each glycosylated (N-linked (GlcNAc...) asparagine). Residues cysteine 382 and cysteine 445 are joined by a disulfide bond. Residue alanine 485 is the site of GPI-anchor amidated alanine attachment. Positions alanine 486 to leucine 511 are cleaved as a propeptide — removed in mature form.

It belongs to the glycosyl hydrolase 17 family. Post-translationally, contains two additional disulfide bonds.

Its subcellular location is the cell membrane. It carries out the reaction Hydrolysis of (1-&gt;3)-beta-D-glucosidic linkages in (1-&gt;3)-beta-D-glucans.. In Arabidopsis thaliana (Mouse-ear cress), this protein is Glucan endo-1,3-beta-glucosidase 1.